A 386-amino-acid chain; its full sequence is tRNA N6-adenosine threonylcarbamoyltransferase (386 aa).

Residues His141, His145, and Tyr162 each coordinate a divalent metal cation. Substrate is bound by residues 162-166, Asp194, Gly209, Glu213, and Asn315; that span reads YVSGG. An a divalent metal cation-binding site is contributed by Asp344.

This sequence belongs to the KAE1 / TsaD family. As to quaternary structure, component of the EKC/KEOPS complex composed of at least BUD32, CGI121, GON7, KAE1 and PCC1; the whole complex dimerizes. The cofactor is a divalent metal cation.

It localises to the cytoplasm. The protein resides in the nucleus. It carries out the reaction L-threonylcarbamoyladenylate + adenosine(37) in tRNA = N(6)-L-threonylcarbamoyladenosine(37) in tRNA + AMP + H(+). In terms of biological role, component of the EKC/KEOPS complex that is required for the formation of a threonylcarbamoyl group on adenosine at position 37 (t(6)A37) in tRNAs that read codons beginning with adenine. The complex is probably involved in the transfer of the threonylcarbamoyl moiety of threonylcarbamoyl-AMP (TC-AMP) to the N6 group of A37. KAE1 likely plays a direct catalytic role in this reaction, but requires other protein(s) of the complex to fulfill this activity. The EKC/KEOPS complex also promotes both telomere uncapping and telomere elongation. The complex is required for efficient recruitment of transcriptional coactivators. The chain is tRNA N6-adenosine threonylcarbamoyltransferase from Saccharomyces cerevisiae (strain ATCC 204508 / S288c) (Baker's yeast).